Consider the following 397-residue polypeptide: N-acetyllactosaminide beta-1,3-N-acetylglucosaminyltransferase 2 (397 aa).

At 1–7 (MSVGRRR) the chain is on the cytoplasmic side. Residues 8-28 (IKLLGILMMANVFIYFIMEVS) traverse the membrane as a helical; Signal-anchor for type II membrane protein segment. Over 29-397 (KSSSQEKNGK…SQLQSAHLKC (369 aa)) the chain is Lumenal. 5 N-linked (GlcNAc...) asparagine glycosylation sites follow: asparagine 79, asparagine 89, asparagine 127, asparagine 173, and asparagine 219.

This sequence belongs to the glycosyltransferase 31 family. As to quaternary structure, interacts with B3GNT8; this interaction greatly increases B3GNT2 catalytic activity, independently of B3GNT8 enzymatic activity. The cofactor is Mn(2+). As to expression, ubiquitous.

It localises to the golgi apparatus membrane. It carries out the reaction a beta-D-galactosyl-(1-&gt;4)-N-acetyl-beta-D-glucosaminyl derivative + UDP-N-acetyl-alpha-D-glucosamine = an N-acetyl-beta-D-glucosaminyl-(1-&gt;3)-beta-D-galactosyl-(1-&gt;4)-N-acetyl-beta-D-glucosaminyl derivative + UDP + H(+). The protein operates within protein modification; protein glycosylation. Functionally, beta-1,3-N-acetylglucosaminyltransferase involved in the synthesis of poly-N-acetyllactosamine. Catalyzes the initiation and elongation of poly-N-acetyllactosamine chains. Shows a marked preference for Gal(beta1-4)Glc(NAc)-based acceptors. Probably constitutes the main polylactosamine synthase. This Homo sapiens (Human) protein is N-acetyllactosaminide beta-1,3-N-acetylglucosaminyltransferase 2 (B3GNT2).